The following is a 376-amino-acid chain: Glycerol-3-phosphate acyltransferase 9 (376 aa).

Over 1–78 (MSSTAGRLVT…SNPPEPWNWN (78 aa)) the chain is Cytoplasmic. Ser-13 carries the phosphoserine modification. 3 consecutive transmembrane segments (helical) span residues 79-99 (IYLFPLYCFGVVVRYCILFPL), 102-122 (FTLAFGWIIFLSLFIPVNALL), and 135-155 (VLVEMICSFFVASWTGVVKYH). Residues 156–376 (GPRPSIRPKQ…ESILARLEEK (221 aa)) lie on the Cytoplasmic side of the membrane. The catalytic stretch occupies residues 168-180 (VANHTSMIDFIVL). An HXXXXD motif motif is present at residues 171 to 176 (HTSMID). 209–218 (GCIWFNRSEA) contacts sn-glycerol 3-phosphate. Residues 242–262 (IFPEGTCVNNNYTVMFKKGAF) are glycerol-3-phosphate binding. The catalytic stretch occupies residues 266–275 (CTVCPIAIKY). Positions 369–373 (ILARL) are endoplasmic reticulum targeting.

It belongs to the 1-acyl-sn-glycerol-3-phosphate acyltransferase family. In terms of assembly, self-interacts. Interacts with LPAT2 and LPCAT2. As to expression, up-regulated during embryogenesis. Expressed in seedlings, leaves, stems, roots, floral buds, flowers, pollen, and siliques at various developmental stages.

It is found in the endoplasmic reticulum membrane. The catalysed reaction is sn-glycerol 3-phosphate + an acyl-CoA = a 1-acyl-sn-glycero-3-phosphate + CoA. Its pathway is glycerolipid metabolism; triacylglycerol biosynthesis. Its function is as follows. Essential protein. Required for male and female gametophytes development. Exhibits sn-1 acyltransferase activity with high specificity for acyl-coenzyme A, thus triggering storage lipid biosynthesis and playing an important role in the Kennedy pathway of glycerolipid biosynthesis. Catalyzes triacylglycerol (TAG) accumulation involved in membrane lipid and oil biosynthesis, especially in seeds. Also contributes to the biosynthesis of both polar lipids and TAG in developing leaves, as well as lipid droplet production in developing pollen grains. Seems to not contribute to surface lipid biosynthesis (e.g. waxes and cutin). This is Glycerol-3-phosphate acyltransferase 9 from Arabidopsis thaliana (Mouse-ear cress).